A 360-amino-acid chain; its full sequence is Phospho-N-acetylmuramoyl-pentapeptide-transferase (360 aa).

10 consecutive transmembrane segments (helical) span residues 21 to 41, 73 to 93, 94 to 114, 132 to 152, 168 to 188, 199 to 219, 239 to 259, 263 to 283, 288 to 308, and 338 to 358; these read YLTF…LWIG, TMGG…WGDL, SNPY…IGFV, WKYF…YALG, IMPQ…VGTS, GLAI…AWAT, LVIF…FNTY, VFMG…IAVL, FLLV…ILQV, and VIIR…VTLK.

The protein belongs to the glycosyltransferase 4 family. MraY subfamily. It depends on Mg(2+) as a cofactor.

The protein resides in the cell inner membrane. It carries out the reaction UDP-N-acetyl-alpha-D-muramoyl-L-alanyl-gamma-D-glutamyl-meso-2,6-diaminopimeloyl-D-alanyl-D-alanine + di-trans,octa-cis-undecaprenyl phosphate = di-trans,octa-cis-undecaprenyl diphospho-N-acetyl-alpha-D-muramoyl-L-alanyl-D-glutamyl-meso-2,6-diaminopimeloyl-D-alanyl-D-alanine + UMP. Its pathway is cell wall biogenesis; peptidoglycan biosynthesis. In terms of biological role, catalyzes the initial step of the lipid cycle reactions in the biosynthesis of the cell wall peptidoglycan: transfers peptidoglycan precursor phospho-MurNAc-pentapeptide from UDP-MurNAc-pentapeptide onto the lipid carrier undecaprenyl phosphate, yielding undecaprenyl-pyrophosphoryl-MurNAc-pentapeptide, known as lipid I. This Mannheimia succiniciproducens (strain KCTC 0769BP / MBEL55E) protein is Phospho-N-acetylmuramoyl-pentapeptide-transferase.